Here is a 337-residue protein sequence, read N- to C-terminus: Fructose-1,6-bisphosphatase class 1 (337 aa).

Residues glutamate 89, aspartate 112, leucine 114, and aspartate 115 each contribute to the Mg(2+) site. Residues 115 to 118, asparagine 208, tyrosine 241, and lysine 271 each bind substrate; that span reads DGSS. Glutamate 277 contributes to the Mg(2+) binding site.

Belongs to the FBPase class 1 family. As to quaternary structure, homotetramer. It depends on Mg(2+) as a cofactor.

It is found in the cytoplasm. The enzyme catalyses beta-D-fructose 1,6-bisphosphate + H2O = beta-D-fructose 6-phosphate + phosphate. It functions in the pathway carbohydrate biosynthesis; gluconeogenesis. The chain is Fructose-1,6-bisphosphatase class 1 from Yersinia pseudotuberculosis serotype O:1b (strain IP 31758).